The primary structure comprises 55 residues: Large ribosomal subunit protein bL33 (55 aa).

This sequence belongs to the bacterial ribosomal protein bL33 family.

This chain is Large ribosomal subunit protein bL33, found in Hyphomonas neptunium (strain ATCC 15444).